Reading from the N-terminus, the 216-residue chain is Somatotropin (216 aa).

The first 26 residues, 1 to 26, serve as a signal peptide directing secretion; sequence MAADPQSSVLLAFALLCLPWPQEVGA. H45 contributes to the Zn(2+) binding site. A disulfide bridge connects residues C78 and C189. At S131 the chain carries Phosphoserine. E198 contacts Zn(2+). A disulfide bridge connects residues C206 and C214.

It belongs to the somatotropin/prolactin family.

The protein resides in the secreted. Its function is as follows. Plays an important role in growth control. Its major role in stimulating body growth is to stimulate the liver and other tissues to secrete IGF1. It stimulates both the differentiation and proliferation of myoblasts. It also stimulates amino acid uptake and protein synthesis in muscle and other tissues. In Ailuropoda melanoleuca (Giant panda), this protein is Somatotropin (GH1).